We begin with the raw amino-acid sequence, 107 residues long: Nucleoid-associated protein mlr5504 (107 aa).

This sequence belongs to the YbaB/EbfC family. As to quaternary structure, homodimer.

The protein resides in the cytoplasm. It is found in the nucleoid. Functionally, binds to DNA and alters its conformation. May be involved in regulation of gene expression, nucleoid organization and DNA protection. The protein is Nucleoid-associated protein mlr5504 of Mesorhizobium japonicum (strain LMG 29417 / CECT 9101 / MAFF 303099) (Mesorhizobium loti (strain MAFF 303099)).